Consider the following 423-residue polypeptide: Osteomodulin (423 aa).

The N-terminal stretch at methionine 1–glycine 20 is a signal peptide. Sulfotyrosine is present on residues tyrosine 22, tyrosine 25, tyrosine 31, tyrosine 39, tyrosine 51, and tyrosine 77. The region spanning alanine 53–methionine 91 is the LRRNT domain. LRR repeat units follow at residues histidine 92 to asparagine 113, histidine 116 to serine 129, asparagine 142 to leucine 164, glutamate 165 to glycine 184, asparagine 187 to isoleucine 207, lysine 213 to leucine 233, serine 234 to lysine 255, lysine 258 to leucine 279, asparagine 281 to glutamine 294, asparagine 301 to proline 322, and histidine 331 to cysteine 353. Asparagine 113 and asparagine 121 each carry an N-linked (GlcNAc...) asparagine glycan. Asparagine 187 is a glycosylation site (N-linked (GlcNAc...) asparagine). N-linked (GlcNAc...) asparagine glycans are attached at residues asparagine 242 and asparagine 278. Residue asparagine 316 is glycosylated (N-linked (GlcNAc...) asparagine). A disulfide bridge links cysteine 321 with cysteine 353. The tract at residues tyrosine 383–histidine 408 is disordered. Positions aspartate 385–serine 394 are enriched in acidic residues. Tyrosine 413 and tyrosine 414 each carry sulfotyrosine.

This sequence belongs to the small leucine-rich proteoglycan (SLRP) family. SLRP class II subfamily. As to quaternary structure, binds the alpha(V)beta(3)-integrin. In terms of processing, glycosylated; contains keratan sulfate. In terms of tissue distribution, osteoblast and odontoblast. Expressed in femoral bone and calvaria tissues. Detected in femoral head, rib, tendon and bone marrow.

The protein localises to the secreted. It is found in the extracellular space. The protein resides in the extracellular matrix. Its function is as follows. May be implicated in biomineralization processes. Has a function in binding of osteoblasts via the alpha(V)beta(3)-integrin. The protein is Osteomodulin (Omd) of Rattus norvegicus (Rat).